A 205-amino-acid chain; its full sequence is tRNA (guanine-N(7)-)-methyltransferase (205 aa).

Glu36, Glu61, Asp88, and Asp109 together coordinate S-adenosyl-L-methionine. The active site involves Asp109. Lys113 serves as a coordination point for substrate. Residues 115–120 are interaction with RNA; sequence RHEKRR. Substrate is bound by residues Asp145 and 183–186; that span reads TGYE.

This sequence belongs to the class I-like SAM-binding methyltransferase superfamily. TrmB family.

The enzyme catalyses guanosine(46) in tRNA + S-adenosyl-L-methionine = N(7)-methylguanosine(46) in tRNA + S-adenosyl-L-homocysteine. Its pathway is tRNA modification; N(7)-methylguanine-tRNA biosynthesis. Its function is as follows. Catalyzes the formation of N(7)-methylguanine at position 46 (m7G46) in tRNA. This Mycoplasmopsis agalactiae (strain NCTC 10123 / CIP 59.7 / PG2) (Mycoplasma agalactiae) protein is tRNA (guanine-N(7)-)-methyltransferase.